A 142-amino-acid chain; its full sequence is Small heat shock protein IbpB (142 aa).

The region spanning A26–R137 is the sHSP domain.

It belongs to the small heat shock protein (HSP20) family. As to quaternary structure, homodimer. Forms homomultimers of about 100-150 subunits at optimal growth temperatures. Conformation changes to oligomers at high temperatures or high ionic concentrations. The decrease in size of the multimers is accompanied by an increase in chaperone activity.

The protein localises to the cytoplasm. In terms of biological role, associates with aggregated proteins, together with IbpA, to stabilize and protect them from irreversible denaturation and extensive proteolysis during heat shock and oxidative stress. Aggregated proteins bound to the IbpAB complex are more efficiently refolded and reactivated by the ATP-dependent chaperone systems ClpB and DnaK/DnaJ/GrpE. Its activity is ATP-independent. This chain is Small heat shock protein IbpB, found in Shigella flexneri serotype 5b (strain 8401).